Reading from the N-terminus, the 234-residue chain is Ribosome maturation protein SDO1 homolog (234 aa).

This sequence belongs to the SDO1/SBDS family.

The sequence is that of Ribosome maturation protein SDO1 homolog from Archaeoglobus fulgidus (strain ATCC 49558 / DSM 4304 / JCM 9628 / NBRC 100126 / VC-16).